Reading from the N-terminus, the 464-residue chain is MMYDDTIAAIATPPGEGGIGIVRISGKDALSILERIFVPVRPGRWKPYRMRYGHVVDGAGVRVDEALAVFMRGPRSFTAEDTVEISVHGGPLVVERVLQQALAAGARAANPGEFTMRAFLNGRIDLTQAEATLDIITARTTTALALAEAQLGGWLSHELRRIRALLIDPLAYCTALVDFPEDEVEPQDVETPLTAAVQALDTLVATAEQGIIYRQGARATLVGRPNAGKSSLLNALLRIDRAIVTPIPGTTRDTLEETANLGGVPVVLTDTAGIVESVDPVERLGVERSRQAVAQADLLLLVVEGVSQPVDDDREIVALTRDKRTVLIVNKIDLIDGADAVQECMKFLKCAYENLRGVPFDATIAVSALTGQGLDMLGATVARLLLGDSSPADGRLVTNVRHRDALARAATHARDALDSFRRGVSPDLLAVDLTAAINAIGEVTGEAVGDDLLHAIFSRFCIGK.

Residues arginine 23, glutamate 84, and arginine 123 each coordinate (6S)-5-formyl-5,6,7,8-tetrahydrofolate. Residues 216 to 386 form the TrmE-type G domain; sequence GARATLVGRP…LGATVARLLL (171 aa). Asparagine 226 contacts K(+). GTP contacts are provided by residues 226–231, 245–251, and 270–273; these read NAGKSS, TPIPGTT, and DTAG. A Mg(2+)-binding site is contributed by serine 230. Threonine 245, isoleucine 247, and threonine 250 together coordinate K(+). Threonine 251 contacts Mg(2+). Lysine 464 lines the (6S)-5-formyl-5,6,7,8-tetrahydrofolate pocket.

Belongs to the TRAFAC class TrmE-Era-EngA-EngB-Septin-like GTPase superfamily. TrmE GTPase family. As to quaternary structure, homodimer. Heterotetramer of two MnmE and two MnmG subunits. K(+) serves as cofactor.

It is found in the cytoplasm. In terms of biological role, exhibits a very high intrinsic GTPase hydrolysis rate. Involved in the addition of a carboxymethylaminomethyl (cmnm) group at the wobble position (U34) of certain tRNAs, forming tRNA-cmnm(5)s(2)U34. This is tRNA modification GTPase MnmE from Roseiflexus castenholzii (strain DSM 13941 / HLO8).